Consider the following 157-residue polypeptide: Succinate dehydrogenase assembly factor 2-B, mitochondrial (157 aa).

A mitochondrion-targeting transit peptide spans 1–24; it reads MLRQFLFSTASRRLVRPMIAPHRS.

Belongs to the SDHAF2 family. Interacts with the flavoprotein subunit within the SDH catalytic dimer.

Its subcellular location is the mitochondrion matrix. Plays an essential role in the assembly of succinate dehydrogenase (SDH), an enzyme complex (also referred to as respiratory complex II) that is a component of both the tricarboxylic acid (TCA) cycle and the mitochondrial electron transport chain, and which couples the oxidation of succinate to fumarate with the reduction of ubiquinone (coenzyme Q) to ubiquinol. Required for flavinylation (covalent attachment of FAD) of the flavoprotein subunit of the SDH catalytic dimer. This Drosophila persimilis (Fruit fly) protein is Succinate dehydrogenase assembly factor 2-B, mitochondrial.